A 96-amino-acid chain; its full sequence is Probable quinol oxidase subunit 4 (96 aa).

3 helical membrane passes run 8-28, 36-56, and 68-88; these read TVGFIASIVLTLLAVYVTLYT, LTIIFGFAFVQAGLQLLMFMH, and FKVIFALVITLCFVVGTYWVM.

Belongs to the cytochrome c oxidase bacterial subunit 4 family.

It localises to the cell membrane. The enzyme catalyses 2 a quinol + O2 = 2 a quinone + 2 H2O. In terms of biological role, catalyzes quinol oxidation with the concomitant reduction of oxygen to water. This is Probable quinol oxidase subunit 4 (qoxD) from Staphylococcus aureus (strain USA300).